A 415-amino-acid polypeptide reads, in one-letter code: Elongation factor Tu, chloroplastic (415 aa).

In terms of domain architecture, tr-type G spans 13–217 (KIHLNVGTIG…HLDLYLPTPR (205 aa)). The segment at 22–29 (GHFSHGKT) is G1. Residue 22-29 (GHFSHGKT) participates in GTP binding. T29 lines the Mg(2+) pocket. The segment at 63 to 67 (NMSIY) is G2. A G3 region spans residues 84-87 (DCPG). GTP is bound by residues 84-88 (DCPGH) and 139-142 (NKED). The tract at residues 139-142 (NKED) is G4. Residues 177-179 (SAL) are G5.

This sequence belongs to the TRAFAC class translation factor GTPase superfamily. Classic translation factor GTPase family. EF-Tu/EF-1A subfamily.

The protein localises to the plastid. The protein resides in the chloroplast. It catalyses the reaction GTP + H2O = GDP + phosphate + H(+). Its function is as follows. GTP hydrolase that promotes the GTP-dependent binding of aminoacyl-tRNA to the A-site of ribosomes during protein biosynthesis. This Coleochaete orbicularis (Charophycean green alga) protein is Elongation factor Tu, chloroplastic (tufA).